A 177-amino-acid chain; its full sequence is Translation initiation factor IF-3 (177 aa).

It belongs to the IF-3 family. Monomer.

It localises to the cytoplasm. In terms of biological role, IF-3 binds to the 30S ribosomal subunit and shifts the equilibrium between 70S ribosomes and their 50S and 30S subunits in favor of the free subunits, thus enhancing the availability of 30S subunits on which protein synthesis initiation begins. In Nitratiruptor sp. (strain SB155-2), this protein is Translation initiation factor IF-3.